A 35-amino-acid polypeptide reads, in one-letter code: Pheromone-binding protein 2 (35 aa).

It belongs to the PBP/GOBP family. As to quaternary structure, homodimer. In terms of tissue distribution, antenna.

Its function is as follows. This major soluble protein in olfactory sensilla of male moths might serve to solubilize the extremely hydrophobic pheromone molecules and to transport pheromone through the aqueous lymph to receptors located on olfactory cilia. The sequence is that of Pheromone-binding protein 2 from Lymantria dispar (Gypsy moth).